A 267-amino-acid chain; its full sequence is Glucosamine-6-phosphate deaminase (267 aa).

Residue Asp-71 is the Proton acceptor; for enolization step of the active site. The active-site For ring-opening step is Asp-140. The active-site Proton acceptor; for ring-opening step is His-142. The active-site For ring-opening step is the Glu-147.

The protein belongs to the glucosamine/galactosamine-6-phosphate isomerase family. As to quaternary structure, homohexamer.

The protein localises to the cytoplasm. It catalyses the reaction alpha-D-glucosamine 6-phosphate + H2O = beta-D-fructose 6-phosphate + NH4(+). Its pathway is nucleotide-sugar biosynthesis; UDP-N-acetyl-alpha-D-glucosamine biosynthesis; alpha-D-glucosamine 6-phosphate from D-fructose 6-phosphate: step 1/1. In terms of biological role, catalyzes the reversible conversion of alpha-D-glucosamine 6-phosphate (GlcN-6P) into beta-D-fructose 6-phosphate (Fru-6P) and ammonium ion, a regulatory reaction step in de novo uridine diphosphate-N-acetyl-alpha-D-glucosamine (UDP-GlcNAc) biosynthesis via hexosamine pathway. This is Glucosamine-6-phosphate deaminase from Caenorhabditis elegans.